The chain runs to 571 residues: Transcription factor ABORTED MICROSPORES (571 aa).

The segment covering 275–284 has biased composition (basic and acidic residues); it reads NDKDMNENGR. Disordered stretches follow at residues 275 to 321, 365 to 390, and 536 to 571; these read NDKD…AERR, ELQD…MSLN, and DDHQ…YHNQ. One can recognise a bHLH domain in the interval 310-359; that stretch reads GSQAKNLMAERRRRKKLNDRLYALRSLVPRITKLDRASILGDAINYVKEL. A compositionally biased stretch (acidic residues) spans 368-378; that stretch reads DELEENSETED. Polar residues predominate over residues 381-390; sequence NRPQGGMSLN. The span at 556-571 shows a compositional bias: basic residues; the sequence is AHHHHHHQHINHYHNQ.

As to quaternary structure, homodimer. Interacts with ASHR3. Mostly expressed in closed, post-meiotic buds, and, to a lower extent, in pre-meiotic buds. Detected in leaves, stems, and flowers.

The protein localises to the nucleus. Functionally, transcription factor. Plays a crucial role in tapetum development. Required for male fertility and pollen differentiation, especially during the post-meiotic transcriptional regulation of microspore development within the developing anther. Binds E-box regions in the AHL16/TEK promoter. This Arabidopsis thaliana (Mouse-ear cress) protein is Transcription factor ABORTED MICROSPORES (AMS).